The primary structure comprises 168 residues: Protein SprT (168 aa).

The region spanning 20–166 (EKLQQANKYL…RHCQAILQLI (147 aa)) is the SprT-like domain. His78 contributes to the Zn(2+) binding site. Glu79 is a catalytic residue. His82 lines the Zn(2+) pocket.

It belongs to the SprT family. Zn(2+) serves as cofactor.

It is found in the cytoplasm. The chain is Protein SprT from Proteus mirabilis (strain HI4320).